Reading from the N-terminus, the 860-residue chain is Leucine--tRNA ligase (860 aa).

The 'HIGH' region motif lies at 42–52 (PYPSGRLHMGH). A 'KMSKS' region motif is present at residues 619-623 (KMSKS). Lys622 serves as a coordination point for ATP.

It belongs to the class-I aminoacyl-tRNA synthetase family.

It localises to the cytoplasm. It catalyses the reaction tRNA(Leu) + L-leucine + ATP = L-leucyl-tRNA(Leu) + AMP + diphosphate. This chain is Leucine--tRNA ligase, found in Salmonella paratyphi B (strain ATCC BAA-1250 / SPB7).